Consider the following 77-residue polypeptide: NADH-ubiquinone oxidoreductase chain 4L (77 aa).

The next 2 membrane-spanning stretches (helical) occupy residues 15–37 and 44–64; these read WQRLIFILISLEFMMLSLFLKFS and MFFYFMCFSVISSILGMVVMV.

Belongs to the complex I subunit 4L family.

It localises to the mitochondrion membrane. The catalysed reaction is a ubiquinone + NADH + 5 H(+)(in) = a ubiquinol + NAD(+) + 4 H(+)(out). Core subunit of the mitochondrial membrane respiratory chain NADH dehydrogenase (Complex I) that is believed to belong to the minimal assembly required for catalysis. Complex I functions in the transfer of electrons from NADH to the respiratory chain. The immediate electron acceptor for the enzyme is believed to be ubiquinone. The sequence is that of NADH-ubiquinone oxidoreductase chain 4L from Caenorhabditis elegans.